The following is a 156-amino-acid chain: Small ribosomal subunit protein uS7 (156 aa).

Belongs to the universal ribosomal protein uS7 family. As to quaternary structure, part of the 30S ribosomal subunit. Contacts proteins S9 and S11.

In terms of biological role, one of the primary rRNA binding proteins, it binds directly to 16S rRNA where it nucleates assembly of the head domain of the 30S subunit. Is located at the subunit interface close to the decoding center, probably blocks exit of the E-site tRNA. This chain is Small ribosomal subunit protein uS7, found in Frankia alni (strain DSM 45986 / CECT 9034 / ACN14a).